The chain runs to 350 residues: 2-oxoglutarate-dependent ethylene/succinate-forming enzyme (350 aa).

In terms of domain architecture, Fe2OG dioxygenase spans 166-286; sequence GWHHMRVLRF…RFACAYFHEP (121 aa). Residues His189 and His268 each contribute to the Fe cation site.

This sequence belongs to the iron/ascorbate-dependent oxidoreductase family. Monomer. It depends on Fe(2+) as a cofactor.

The catalysed reaction is 2-oxoglutarate + O2 + 2 H(+) = ethene + 3 CO2 + H2O. It catalyses the reaction L-arginine + 2-oxoglutarate + O2 = guanidine + L-glutamate 5-semialdehyde + succinate + CO2. It functions in the pathway alkene biosynthesis; ethylene biosynthesis via 2-oxoglutarate. With respect to regulation, activated by catalase. Inhibited by chelating reagents such as EDTA and Tiron (4,5-dihydroxy-1,3-benzene disulphonic acid), and by DTNB (5,5'-dithio-bis-2-nitrobenzoate) and hydrogen peroxide. In terms of biological role, simultaneously catalyzes two reactions, namely formation of ethylene and of succinate from 2-oxoglutarate, with a molar ratio of 2:1. The chain is 2-oxoglutarate-dependent ethylene/succinate-forming enzyme (efe) from Pseudomonas savastanoi pv. phaseolicola (Pseudomonas syringae pv. phaseolicola).